Here is a 261-residue protein sequence, read N- to C-terminus: Serine/arginine-rich splicing factor 12 (261 aa).

In terms of domain architecture, RRM spans 10 to 88; sequence TSLFIRNVAD…RQIEIQFAQG (79 aa). Residues 86-261 are disordered; the sequence is AQGDRKTPGQ…SRSYRHKNSW (176 aa). Residues 88 to 109 show a composition bias toward basic and acidic residues; the sequence is GDRKTPGQMKSKERHPCSPSDH. Basic residues-rich tracts occupy residues 110-122 and 178-191; these read RRSR…RTRS and GRSR…RSKS. The segment covering 192–209 has biased composition (low complexity); sequence IGKSQSSSPQKQTSSGTK. Polar residues predominate over residues 230 to 239; it reads GYTNSETKVQ. Residues 240 to 261 show a composition bias toward basic residues; that stretch reads TAKHSHFRSHSRSRSYRHKNSW.

Belongs to the splicing factor SR family. As to expression, expressed in testis.

It is found in the nucleus. Functionally, splicing factor that seems to antagonize SR proteins in pre-mRNA splicing regulation. The protein is Serine/arginine-rich splicing factor 12 (SRSF12) of Homo sapiens (Human).